Consider the following 268-residue polypeptide: Leucyl/phenylalanyl-tRNA--protein transferase (268 aa).

It belongs to the L/F-transferase family.

Its subcellular location is the cytoplasm. It carries out the reaction N-terminal L-lysyl-[protein] + L-leucyl-tRNA(Leu) = N-terminal L-leucyl-L-lysyl-[protein] + tRNA(Leu) + H(+). The catalysed reaction is N-terminal L-arginyl-[protein] + L-leucyl-tRNA(Leu) = N-terminal L-leucyl-L-arginyl-[protein] + tRNA(Leu) + H(+). It catalyses the reaction L-phenylalanyl-tRNA(Phe) + an N-terminal L-alpha-aminoacyl-[protein] = an N-terminal L-phenylalanyl-L-alpha-aminoacyl-[protein] + tRNA(Phe). In terms of biological role, functions in the N-end rule pathway of protein degradation where it conjugates Leu, Phe and, less efficiently, Met from aminoacyl-tRNAs to the N-termini of proteins containing an N-terminal arginine or lysine. This is Leucyl/phenylalanyl-tRNA--protein transferase from Zymomonas mobilis subsp. mobilis (strain ATCC 31821 / ZM4 / CP4).